Reading from the N-terminus, the 497-residue chain is MDHTVKSKTADTVSSPCAVVGVFERRRLSPAAKAVDEASGGAITAALKRGDIEAKPGQTRLLTDLDNVKAARVLLVGLGVERDLDERTYRKAVTAAAQAAQDCGAGEATFYLPEVEVKTRDLAWRVQQLAIGVTGALYRFDDMKSEAETPRKPLKKLALGVADKAEAKVADEALAQGMAVGRGMSLARDLGNLPGNVCTPSYLADQAKALGKRFDKLKVQSLDRKDMKKLGMGALLAVAQGSQEEPRLIAMEWNGGKKDEQPYVLVGKGITFDTGGISLKPGAAMDEMKFDMCGAASVFGTLQAVAEMNLPINVVGVVPASDNMPDGKATRPGDIIQTLSGQTVEVLNTDAEGRLVLCDALTWSERFKPKEIVDIATLTGACIIALGHHRSAVLGNHPPLVKALQDAGETSGDKCWELPLDPEYDEQLKSNFADMANIGGRPAGTITAASFLARFTKRYQWAHLDIAGTAWLTGEQKGATGRPVPLLTRYLMDRAGA.

Lys268 and Asp273 together coordinate Mn(2+). Lys280 is a catalytic residue. Mn(2+) is bound by residues Asp291, Asp350, and Glu352. Residue Arg354 is part of the active site.

This sequence belongs to the peptidase M17 family. Mn(2+) is required as a cofactor.

The protein resides in the cytoplasm. The enzyme catalyses Release of an N-terminal amino acid, Xaa-|-Yaa-, in which Xaa is preferably Leu, but may be other amino acids including Pro although not Arg or Lys, and Yaa may be Pro. Amino acid amides and methyl esters are also readily hydrolyzed, but rates on arylamides are exceedingly low.. It carries out the reaction Release of an N-terminal amino acid, preferentially leucine, but not glutamic or aspartic acids.. Presumably involved in the processing and regular turnover of intracellular proteins. Catalyzes the removal of unsubstituted N-terminal amino acids from various peptides. In Alkalilimnicola ehrlichii (strain ATCC BAA-1101 / DSM 17681 / MLHE-1), this protein is Probable cytosol aminopeptidase.